A 192-amino-acid polypeptide reads, in one-letter code: Ribosomal RNA large subunit methyltransferase E (192 aa).

S-adenosyl-L-methionine-binding residues include Gly-48, Phe-50, Asp-67, Asp-85, and Asp-107. Residue Lys-147 is the Proton acceptor of the active site.

Belongs to the class I-like SAM-binding methyltransferase superfamily. RNA methyltransferase RlmE family.

It localises to the cytoplasm. The enzyme catalyses uridine(2552) in 23S rRNA + S-adenosyl-L-methionine = 2'-O-methyluridine(2552) in 23S rRNA + S-adenosyl-L-homocysteine + H(+). Functionally, specifically methylates the uridine in position 2552 of 23S rRNA at the 2'-O position of the ribose in the fully assembled 50S ribosomal subunit. The protein is Ribosomal RNA large subunit methyltransferase E of Borrelia garinii subsp. bavariensis (strain ATCC BAA-2496 / DSM 23469 / PBi) (Borreliella bavariensis).